A 104-amino-acid polypeptide reads, in one-letter code: Nucleoid-associated protein LSL_1227 (104 aa).

A compositionally biased stretch (low complexity) spans 1 to 19 (MMMRGMNMQSMMKQMQKLQ). Positions 1 to 24 (MMMRGMNMQSMMKQMQKLQKNMKK) are disordered.

The protein belongs to the YbaB/EbfC family. Homodimer.

The protein resides in the cytoplasm. Its subcellular location is the nucleoid. Functionally, binds to DNA and alters its conformation. May be involved in regulation of gene expression, nucleoid organization and DNA protection. In Ligilactobacillus salivarius (strain UCC118) (Lactobacillus salivarius), this protein is Nucleoid-associated protein LSL_1227.